An 838-amino-acid chain; its full sequence is Sec1 family domain-containing protein MIP3 (838 aa).

A disordered region spans residues 637–677; that stretch reads KSEETKEIPSDDQLDIDALDDDPWGKWGDEEEEEVDNSKAD. The span at 646–658 shows a compositional bias: acidic residues; the sequence is SDDQLDIDALDDD.

The protein belongs to the STXBP/unc-18/SEC1 family. In terms of assembly, forms a complex with MAG2, ZW10/MIP1 and MIP2 on the endoplasmic reticulum.

The protein localises to the endoplasmic reticulum membrane. Its function is as follows. Required for proper maturation of seed storage proteins. Forms a complex with MAG2, ZW10/MIP1 and MIP2 on the endoplasmic reticulum that may be responsible for efficient transport of seed storage proteins. This Arabidopsis thaliana (Mouse-ear cress) protein is Sec1 family domain-containing protein MIP3.